Consider the following 466-residue polypeptide: 3-isopropylmalate dehydratase large subunit (466 aa).

C347, C407, and C410 together coordinate [4Fe-4S] cluster.

It belongs to the aconitase/IPM isomerase family. LeuC type 1 subfamily. As to quaternary structure, heterodimer of LeuC and LeuD. It depends on [4Fe-4S] cluster as a cofactor.

It carries out the reaction (2R,3S)-3-isopropylmalate = (2S)-2-isopropylmalate. It participates in amino-acid biosynthesis; L-leucine biosynthesis; L-leucine from 3-methyl-2-oxobutanoate: step 2/4. In terms of biological role, catalyzes the isomerization between 2-isopropylmalate and 3-isopropylmalate, via the formation of 2-isopropylmaleate. This chain is 3-isopropylmalate dehydratase large subunit, found in Buchnera aphidicola subsp. Thelaxes suberi.